The following is an 845-amino-acid chain: Protein translocase subunit SecA 1 (845 aa).

ATP-binding positions include Gln-85, 103-107, and Asp-492; that span reads GEGKT.

This sequence belongs to the SecA family. As to quaternary structure, monomer and homodimer. Part of the essential Sec protein translocation apparatus which comprises SecA, SecYEG and auxiliary proteins SecDF. Other proteins may also be involved.

Its subcellular location is the cell membrane. The protein localises to the cytoplasm. The catalysed reaction is ATP + H2O + cellular proteinSide 1 = ADP + phosphate + cellular proteinSide 2.. In terms of biological role, part of the Sec protein translocase complex. Interacts with the SecYEG preprotein conducting channel. Has a central role in coupling the hydrolysis of ATP to the transfer of proteins into and across the cell membrane, serving as an ATP-driven molecular motor driving the stepwise translocation of polypeptide chains across the membrane. The protein is Protein translocase subunit SecA 1 of Corynebacterium glutamicum (strain ATCC 13032 / DSM 20300 / JCM 1318 / BCRC 11384 / CCUG 27702 / LMG 3730 / NBRC 12168 / NCIMB 10025 / NRRL B-2784 / 534).